A 222-amino-acid polypeptide reads, in one-letter code: Leucyl/phenylalanyl-tRNA--protein transferase (222 aa).

Belongs to the L/F-transferase family.

The protein localises to the cytoplasm. The catalysed reaction is N-terminal L-lysyl-[protein] + L-leucyl-tRNA(Leu) = N-terminal L-leucyl-L-lysyl-[protein] + tRNA(Leu) + H(+). It catalyses the reaction N-terminal L-arginyl-[protein] + L-leucyl-tRNA(Leu) = N-terminal L-leucyl-L-arginyl-[protein] + tRNA(Leu) + H(+). It carries out the reaction L-phenylalanyl-tRNA(Phe) + an N-terminal L-alpha-aminoacyl-[protein] = an N-terminal L-phenylalanyl-L-alpha-aminoacyl-[protein] + tRNA(Phe). Functionally, functions in the N-end rule pathway of protein degradation where it conjugates Leu, Phe and, less efficiently, Met from aminoacyl-tRNAs to the N-termini of proteins containing an N-terminal arginine or lysine. This chain is Leucyl/phenylalanyl-tRNA--protein transferase, found in Legionella pneumophila (strain Lens).